The chain runs to 283 residues: 2-dehydro-3-deoxyphosphooctonate aldolase (283 aa).

Belongs to the KdsA family.

The protein resides in the cytoplasm. It carries out the reaction D-arabinose 5-phosphate + phosphoenolpyruvate + H2O = 3-deoxy-alpha-D-manno-2-octulosonate-8-phosphate + phosphate. Its pathway is carbohydrate biosynthesis; 3-deoxy-D-manno-octulosonate biosynthesis; 3-deoxy-D-manno-octulosonate from D-ribulose 5-phosphate: step 2/3. The protein operates within bacterial outer membrane biogenesis; lipopolysaccharide biosynthesis. The polypeptide is 2-dehydro-3-deoxyphosphooctonate aldolase (Shewanella frigidimarina (strain NCIMB 400)).